The sequence spans 356 residues: Heat-inducible transcription repressor HrcA (356 aa).

Belongs to the HrcA family.

Functionally, negative regulator of class I heat shock genes (grpE-dnaK-dnaJ and groELS operons). Prevents heat-shock induction of these operons. The chain is Heat-inducible transcription repressor HrcA from Brucella abortus (strain S19).